We begin with the raw amino-acid sequence, 348 residues long: D-amino-acid oxidase (348 aa).

Residues A15, I18, K40, S52, G56, and N58 each coordinate FAD. Y232 and R295 together coordinate (R)-lactate. 2 residues coordinate anthranilate: Y232 and R295. FAD is bound by residues R295, S323, G326, Y327, and Q328.

It belongs to the DAMOX/DASOX family. It depends on FAD as a cofactor.

The protein resides in the peroxisome. It catalyses the reaction a D-alpha-amino acid + O2 + H2O = a 2-oxocarboxylate + H2O2 + NH4(+). The enzyme catalyses D-serine + O2 + H2O = 3-hydroxypyruvate + H2O2 + NH4(+). It carries out the reaction D-alanine + O2 + H2O = pyruvate + H2O2 + NH4(+). The catalysed reaction is D-arginine + O2 + H2O = 5-guanidino-2-oxopentanoate + H2O2 + NH4(+). Catalyzes the oxidative deamination of D-amino acids with broad substrate specificity. Enables the organism to utilize D-amino acids as a source of nutrients. The protein is D-amino-acid oxidase of Schizosaccharomyces pombe (strain 972 / ATCC 24843) (Fission yeast).